Here is a 206-residue protein sequence, read N- to C-terminus: Imidazoleglycerol-phosphate dehydratase (206 aa).

The protein belongs to the imidazoleglycerol-phosphate dehydratase family.

Its subcellular location is the cytoplasm. The catalysed reaction is D-erythro-1-(imidazol-4-yl)glycerol 3-phosphate = 3-(imidazol-4-yl)-2-oxopropyl phosphate + H2O. It functions in the pathway amino-acid biosynthesis; L-histidine biosynthesis; L-histidine from 5-phospho-alpha-D-ribose 1-diphosphate: step 6/9. The chain is Imidazoleglycerol-phosphate dehydratase from Saccharopolyspora erythraea (strain ATCC 11635 / DSM 40517 / JCM 4748 / NBRC 13426 / NCIMB 8594 / NRRL 2338).